We begin with the raw amino-acid sequence, 82 residues long: Neuromacin (82 aa).

Residues 1-23 form the signal peptide; it reads MALLNKLLCFALVFMIFGEFVTP. 4 disulfides stabilise this stretch: Cys-25/Cys-32, Cys-47/Cys-51, Cys-61/Cys-69, and Cys-79/Cys-81.

It belongs to the macin family.

The protein localises to the secreted. In Hirudo medicinalis (Medicinal leech), this protein is Neuromacin.